Here is a 226-residue protein sequence, read N- to C-terminus: ATP-dependent dethiobiotin synthetase BioD (226 aa).

Position 13–18 (13–18) interacts with ATP; sequence DVGKTL. Position 17 (T17) interacts with Mg(2+). K38 is a catalytic residue. ATP is bound by residues D55, 117 to 120, 177 to 178, 206 to 208, and E213; these read EGAG, NR, and PFV. Residues D55 and E117 each coordinate Mg(2+).

Belongs to the dethiobiotin synthetase family. Homodimer. Requires Mg(2+) as cofactor.

It localises to the cytoplasm. It catalyses the reaction (7R,8S)-7,8-diammoniononanoate + CO2 + ATP = (4R,5S)-dethiobiotin + ADP + phosphate + 3 H(+). It participates in cofactor biosynthesis; biotin biosynthesis; biotin from 7,8-diaminononanoate: step 1/2. Its function is as follows. Catalyzes a mechanistically unusual reaction, the ATP-dependent insertion of CO2 between the N7 and N8 nitrogen atoms of 7,8-diaminopelargonic acid (DAPA, also called 7,8-diammoniononanoate) to form a ureido ring. The polypeptide is ATP-dependent dethiobiotin synthetase BioD (Aeromonas salmonicida (strain A449)).